Consider the following 574-residue polypeptide: Sorting nexin-33 (574 aa).

An SH3 domain is found at 1 to 61 (MALKGRALYD…PASYVEIVRP (61 aa)). The residue at position 77 (serine 77) is a Phosphoserine. Positions 79-90 (GTQGSLYSSPSM) are enriched in polar residues. The interval 79-116 (GTQGSLYSSPSMASPARSGGGSGFLSNPGSFEDDDDDD) is disordered. Serine 92 carries the post-translational modification Phosphoserine. Positions 230 to 340 (FACSIEDPTK…HFLSCLDDKQ (111 aa)) constitute a PX domain. The 204-residue stretch at 371 to 574 (LQDVEDRVDT…EKTLHMYDHL (204 aa)) folds into the BAR domain.

The protein belongs to the sorting nexin family. As to quaternary structure, homodimer (via BAR domain). Interacts with ADAM15. Interacts with FASLG. Interacts (via SH3 domain) with DNM1 and DNM2. Interacts with WASL. Interacts with FCHSD1 (via the F-BAR domain). Post-translationally, phosphorylated. In terms of tissue distribution, detected in brain (at protein level).

The protein localises to the cytoplasm. The protein resides in the cytosol. It localises to the membrane. Its subcellular location is the cytoplasmic vesicle membrane. In terms of biological role, plays a role in the reorganization of the cytoskeleton, endocytosis and cellular vesicle trafficking via its interactions with membranes, WASL, DNM1 and DNM2. Acts both during interphase and at the end of mitotic cell divisions. Required for efficient progress through mitosis and cytokinesis. Required for normal formation of the cleavage furrow at the end of mitosis. Modulates endocytosis of cell-surface proteins, such as APP and PRNP; this then modulates the secretion of APP and PRNP peptides. Promotes membrane tubulation (in vitro). May promote the formation of macropinosomes. The sequence is that of Sorting nexin-33 (Snx33) from Mus musculus (Mouse).